The sequence spans 282 residues: Predicted GPI-anchored protein 23 (282 aa).

An N-terminal signal peptide occupies residues 1-18 (MRVSTLVLSTSIIPIATA). The tract at residues 163 to 264 (GQETSGAGSL…SSNSSSSAGM (102 aa)) is disordered. N-linked (GlcNAc...) asparagine glycans are attached at residues asparagine 180, asparagine 192, and asparagine 257. The span at 186–216 (GGSGSSNGTSSGSGSGSGAGVGSGSGSGSGS) shows a compositional bias: gly residues. Positions 236–264 (LGISSSISQSTTRQLQTSGSSNSSSSAGM) are enriched in low complexity. Serine 259 carries GPI-anchor amidated serine lipidation. Residues 260–282 (SSAGMGNVVVGMNAVALAALVLI) constitute a propeptide, removed in mature form.

The protein resides in the cell membrane. Probable cell surface protein involved in the process of adhesion and early events of invasion. This Candida albicans (strain SC5314 / ATCC MYA-2876) (Yeast) protein is Predicted GPI-anchored protein 23 (PGA23).